A 961-amino-acid chain; its full sequence is DNA replication licensing factor MCM2 (961 aa).

The segment covering 1 to 17 (MDDSENNAPSTPGSPGF) has biased composition (polar residues). 2 disordered regions span residues 1–81 (MDDS…FNDN) and 120–220 (AEAE…EEDE). Positions 39 to 78 (SDDDDDDVVGAEEAEVDPNVLPEDDGVVAAEEEEDGEDLF) are enriched in acidic residues. Basic and acidic residues-rich tracts occupy residues 120–146 (AEAE…LHDQ) and 166–176 (PPREPRTPRSD). The segment covering 205 to 220 (QTDDDPYEDEFDEEDE) has biased composition (acidic residues). The C4-type zinc finger occupies 380-406 (CSKCGTVLGPFFQNSYTEVKVGSCPEC). The MCM domain occupies 524–730 (IGERIVKSIA…FTDEMLARFV (207 aa)). 574-581 (GDPGTAKS) contacts ATP. An Arginine finger motif is present at residues 706–709 (SRFD).

This sequence belongs to the MCM family. Component of the minichromosome maintenance (MCM) complex, a heterotetramer composed of MCM2, MCM3, MCM4, MCM5, MCM6 and MCM7. Interacts with CSN5. Widely expressed, with higher expression in developing tissues.

The protein resides in the nucleus. The enzyme catalyses ATP + H2O = ADP + phosphate + H(+). In terms of biological role, probable component of the MCM2-7 complex (MCM complex) that may function as a DNA helicase and which is essential to undergo a single round of replication initiation and elongation per cell cycle in eukaryotic cells. Can complement the fission yeast mcm2 mutant. The chain is DNA replication licensing factor MCM2 from Oryza sativa subsp. japonica (Rice).